The chain runs to 440 residues: MESQQLSQHSPISHGSACASVTSKEVHTNQDPLDVSASKTEECEKASTKANSQQTTTPASSAVPENPHHASPQTAQSHSPQNGPYPQQCMMTQNQANPSGWSFYGHPSMIPYTPYQMSPMYFPPGPQSQFPQYPSSVGTPLSTPSPESGNTFTDSSSADSDMTSTKKYVRPPPMLTSPNDFPNWVKTYIKFLQNSNLGGIIPTVNGKPVRQITDDELTFLYNTFQIFAPSQFLPTWVKDILSVDYTDIMKILSKSIEKMQSDTQEANDIVTLANLQYNGSTPADAFETKVTNIIDRLNNNGIHINNKVACQLIMRGLSGEYKFLRYTRHRHLNMTVAELFLDIHAIYEEQQGSRNSKPNYRRNPSDEKNDSRSYTNTTKPKVIARNPQKTNNSKSKTARAHNVSTSNNSPSTDNDSISKSTTEPIQLNNKHDLHLRPETY.

4 stretches are compositionally biased toward polar residues: residues 1–23 (MESQ…SVTS), 48–60 (TKAN…TPAS), 71–93 (SPQT…MMTQ), and 127–152 (QSQF…GNTF). Disordered regions lie at residues 1–93 (MESQ…MMTQ), 126–173 (PQSQ…RPPP), and 352–440 (GSRN…PETY). Over residues 153-165 (TDSSSADSDMTST) the composition is skewed to low complexity. Positions 299-401 (NNGIHINNKV…NSKSKTARAH (103 aa)) are RNA-binding. Positions 402–418 (NVSTSNNSPSTDNDSIS) are enriched in low complexity. Serine 416 carries the phosphoserine modification. Residues 419-428 (KSTTEPIQLN) are compositionally biased toward polar residues. Residues 429–440 (NKHDLHLRPETY) show a composition bias toward basic and acidic residues.

As to quaternary structure, homotrimer.

It is found in the cytoplasm. In terms of biological role, capsid protein (CA) is the structural component of the virus-like particle (VLP), forming the shell that encapsulates the retrotransposons dimeric RNA genome. The particles are assembled from trimer-clustered units and there are holes in the capsid shells that allow for the diffusion of macromolecules. CA also has nucleocapsid-like chaperone activity, promoting primer tRNA(i)-Met annealing to the multipartite primer-binding site (PBS), dimerization of Ty1 RNA and initiation of reverse transcription. The sequence is that of Transposon Ty1-A Gag polyprotein (TY1A-A) from Saccharomyces cerevisiae (strain ATCC 204508 / S288c) (Baker's yeast).